The chain runs to 454 residues: Bifunctional protein GlmU (454 aa).

The tract at residues M1 to P228 is pyrophosphorylase. UDP-N-acetyl-alpha-D-glucosamine-binding positions include L10–G13, K24, Q76, G81–T82, Y103–D105, G138, E153, N168, and N226. Residue D105 coordinates Mg(2+). N226 is a Mg(2+) binding site. A linker region spans residues W229–Q249. Residues G250 to K454 form an N-acetyltransferase region. Residues R332 and K350 each contribute to the UDP-N-acetyl-alpha-D-glucosamine site. H362 acts as the Proton acceptor in catalysis. The UDP-N-acetyl-alpha-D-glucosamine site is built by Y365 and N376. Residues A379, N385–Y386, S404, A422, and R439 contribute to the acetyl-CoA site.

This sequence in the N-terminal section; belongs to the N-acetylglucosamine-1-phosphate uridyltransferase family. It in the C-terminal section; belongs to the transferase hexapeptide repeat family. As to quaternary structure, homotrimer. It depends on Mg(2+) as a cofactor.

The protein resides in the cytoplasm. The enzyme catalyses alpha-D-glucosamine 1-phosphate + acetyl-CoA = N-acetyl-alpha-D-glucosamine 1-phosphate + CoA + H(+). It catalyses the reaction N-acetyl-alpha-D-glucosamine 1-phosphate + UTP + H(+) = UDP-N-acetyl-alpha-D-glucosamine + diphosphate. It functions in the pathway nucleotide-sugar biosynthesis; UDP-N-acetyl-alpha-D-glucosamine biosynthesis; N-acetyl-alpha-D-glucosamine 1-phosphate from alpha-D-glucosamine 6-phosphate (route II): step 2/2. Its pathway is nucleotide-sugar biosynthesis; UDP-N-acetyl-alpha-D-glucosamine biosynthesis; UDP-N-acetyl-alpha-D-glucosamine from N-acetyl-alpha-D-glucosamine 1-phosphate: step 1/1. It participates in bacterial outer membrane biogenesis; LPS lipid A biosynthesis. Its function is as follows. Catalyzes the last two sequential reactions in the de novo biosynthetic pathway for UDP-N-acetylglucosamine (UDP-GlcNAc). The C-terminal domain catalyzes the transfer of acetyl group from acetyl coenzyme A to glucosamine-1-phosphate (GlcN-1-P) to produce N-acetylglucosamine-1-phosphate (GlcNAc-1-P), which is converted into UDP-GlcNAc by the transfer of uridine 5-monophosphate (from uridine 5-triphosphate), a reaction catalyzed by the N-terminal domain. The sequence is that of Bifunctional protein GlmU from Xanthomonas euvesicatoria pv. vesicatoria (strain 85-10) (Xanthomonas campestris pv. vesicatoria).